The sequence spans 85 residues: UPF0473 protein CPR_1590 (85 aa).

The protein belongs to the UPF0473 family.

This chain is UPF0473 protein CPR_1590, found in Clostridium perfringens (strain SM101 / Type A).